A 412-amino-acid chain; its full sequence is Cellobiose 2-epimerase (412 aa).

Belongs to the cellobiose 2-epimerase family.

It carries out the reaction D-cellobiose = beta-D-glucosyl-(1-&gt;4)-D-mannopyranose. Catalyzes the reversible epimerization of cellobiose to 4-O-beta-D-glucopyranosyl-D-mannose (Glc-Man). Can also use lactose, epilactose, mannobiose and cellotriose. Highly specific for oligosaccharides linked by the beta-1,4-glycosidic linkage. Shows preference for lactose. The polypeptide is Cellobiose 2-epimerase (ce) (Rhodothermus marinus (Rhodothermus obamensis)).